Consider the following 842-residue polypeptide: Alanine--tRNA ligase (842 aa).

Zn(2+) is bound by residues histidine 549, histidine 553, cysteine 650, and histidine 654.

This sequence belongs to the class-II aminoacyl-tRNA synthetase family. Zn(2+) is required as a cofactor.

It localises to the cytoplasm. The enzyme catalyses tRNA(Ala) + L-alanine + ATP = L-alanyl-tRNA(Ala) + AMP + diphosphate. In terms of biological role, catalyzes the attachment of alanine to tRNA(Ala) in a two-step reaction: alanine is first activated by ATP to form Ala-AMP and then transferred to the acceptor end of tRNA(Ala). Also edits incorrectly charged Ser-tRNA(Ala) and Gly-tRNA(Ala) via its editing domain. This is Alanine--tRNA ligase from Campylobacter jejuni subsp. doylei (strain ATCC BAA-1458 / RM4099 / 269.97).